Here is a 1476-residue protein sequence, read N- to C-terminus: ABC transporter G family member 17 (1476 aa).

Disordered stretches follow at residues 13-45 and 68-91; these read SENNNNNNNNNNNNNNNNNNNLNNNNDNDYDYD and FREIDGGKNNNNHDIELGERKPEN. A coiled-coil region spans residues 14–67; sequence ENNNNNNNNNNNNNNNNNNNLNNNNDNDYDYDSINNIEEKFENVSKELEGQSIK. A compositionally biased stretch (low complexity) spans 15–39; that stretch reads NNNNNNNNNNNNNNNNNNNLNNNND. The region spanning 151 to 402 is the ABC transporter 1 domain; sequence LNPFNYFKKD…FLDLGFDCEP (252 aa). In terms of domain architecture, ABC transmembrane type-2 1 spans 507–751; sequence WGDKFTLTSR…SLSVKGENYL (245 aa). Helical transmembrane passes span 517–537, 547–567, 592–612, 623–643, and 764–784; these read FLTILVLSFIFGGIYFQQPLT, AIFTSIIFNCILTQGELHGAL, ILIDIPFILVQVFLHSFIVYF, FFIFCFTLVGVSLSSASLFRG, and LNVVVIFLFWLFYIGLNLFAV. The 245-residue stretch at 838–1082 folds into the ABC transporter 2 domain; that stretch reads FSWKSISYTV…LTSYFERHGV (245 aa). 874–881 is a binding site for ATP; the sequence is GSSGAGKT. Transmembrane regions (helical) follow at residues 1182–1202, 1219–1239, 1260–1280, 1298–1318, 1322–1342, and 1450–1470; these read FYTMGSFAQSAVSGLVIGFTF, SWEAMILGVLLIYLVLPMFFI, LSMIAVEIPYVVLSSTLFFIA, WLMHTMFSVYIVSFAQALGAA, IAISIAALPIVLFYLFLLCGV, and FGIIVAYWGSSILAVLFFVYL. The 224-residue stretch at 1182-1405 folds into the ABC transmembrane type-2 2 domain; the sequence is FYTMGSFAQS…TDCQTYSAPF (224 aa).

Belongs to the ABC transporter superfamily. ABCG family. PDR (TC 3.A.1.205) subfamily.

The protein localises to the membrane. The polypeptide is ABC transporter G family member 17 (abcG17-1) (Dictyostelium discoideum (Social amoeba)).